Here is a 495-residue protein sequence, read N- to C-terminus: Glycerol kinase (495 aa).

Threonine 14 lines the ADP pocket. Positions 14, 15, and 16 each coordinate ATP. Threonine 14 provides a ligand contact to sn-glycerol 3-phosphate. Arginine 18 contacts ADP. Sn-glycerol 3-phosphate is bound by residues arginine 84, glutamate 85, tyrosine 136, and aspartate 246. Arginine 84, glutamate 85, tyrosine 136, aspartate 246, and glutamine 247 together coordinate glycerol. ADP-binding residues include threonine 268 and glycine 312. The ATP site is built by threonine 268, glycine 312, glutamine 316, and glycine 413. Residues glycine 413 and asparagine 417 each coordinate ADP.

The protein belongs to the FGGY kinase family.

It carries out the reaction glycerol + ATP = sn-glycerol 3-phosphate + ADP + H(+). The protein operates within polyol metabolism; glycerol degradation via glycerol kinase pathway; sn-glycerol 3-phosphate from glycerol: step 1/1. With respect to regulation, inhibited by fructose 1,6-bisphosphate (FBP). In terms of biological role, key enzyme in the regulation of glycerol uptake and metabolism. Catalyzes the phosphorylation of glycerol to yield sn-glycerol 3-phosphate. The chain is Glycerol kinase from Bdellovibrio bacteriovorus (strain ATCC 15356 / DSM 50701 / NCIMB 9529 / HD100).